A 573-amino-acid polypeptide reads, in one-letter code: MDKEMFIRRLGAASHRKKAETVIKNGKIMDVFNQEWLETDIAITDGAIVGLGEYEGGNIIDAEGQMIVPGFIDGHVHIESSMVTPPEFAKAVIPHGVTTVVTDPHEIANVSGVKGLEFMLEQAEMTRLNIYFMLPSCVPAAPFEKSGAILNAADLHPFYSREEVLGLAEVMDYVAVEAGEPDMVQKLIDADKAGKRIDGHLAGLSAGFVNVYRAAGVLTDHEVTTPEEALERVRRGMYVMLREGSAAKNTRHVLPAVNEKNVRRFFFCTDDKHLDELVDEGSINYQVKLAIQEGLDPFLAYQMGSLNAAECFGLKTKGAVAPGYDADLLFISDFENVSITKTMINGVIWSGTEQSQSTGGKAASGLLQSVHLSDLHENDLQIPIVQENEIRVIDIIPNQLETKLSLAKPKSGAFFQPDLESDLLKIAVVERHRGVKEIGLGVVRGFGLKEGAIATTISHDSHNLIAVGTNDQDILKAIERLGEIGGGLTIAKGGKELQSVALPIAGLLSDKPLETVNESLKSLHAAITETGFSGAFNPFLTLSFLALPVIPDIKMTTEGLFDVKAFRHIPVQP.

It belongs to the metallo-dependent hydrolases superfamily. Adenine deaminase family. Mn(2+) serves as cofactor.

It catalyses the reaction adenine + H2O + H(+) = hypoxanthine + NH4(+). The polypeptide is Adenine deaminase (Bacillus licheniformis (strain ATCC 14580 / DSM 13 / JCM 2505 / CCUG 7422 / NBRC 12200 / NCIMB 9375 / NCTC 10341 / NRRL NRS-1264 / Gibson 46)).